Here is a 318-residue protein sequence, read N- to C-terminus: MNRFTRYDVTPEVIFNQRRQIIKAMGLGAAALSLPNIGFAAEKSDQLKALNFKDAPKGDFLLTPENKVTGYNNFYEFGVDKASPAKFAKDFKTDPWSLEIAGEVENPFVLNHAQLFNTFPLEERIYRFRCVEAWSMVIPWVGFELARLVEMAKPTSKAKFVIFHTLHDPEQMPGQKNKFFGGGIDYPYVEALTIEEAMNPLTLLSVGLYGKMLPPQNGAPIRLVVPWKYGFKSIKSIVKITFSETRPRTTWEKLAPHEYGFYANVNPNVDHPRWSQASERVIGSGGLLAVKRQDTLMFNGYEKEVAHLYKGLDLKVNF.

The segment at residues 1 to 40 (MNRFTRYDVTPEVIFNQRRQIIKAMGLGAAALSLPNIGFA) is a signal peptide (tat-type signal). Mo-molybdopterin is bound by residues asparagine 72, 75-76 (YE), cysteine 130, threonine 165, asparagine 217, arginine 222, and 233-235 (SIK).

Belongs to the MsrP family. Heterodimer of a catalytic subunit (MsrP) and a heme-binding subunit (MsrQ). Mo-molybdopterin serves as cofactor. In terms of processing, predicted to be exported by the Tat system. The position of the signal peptide cleavage has not been experimentally proven.

It is found in the periplasm. It catalyses the reaction L-methionyl-[protein] + a quinone + H2O = L-methionyl-(S)-S-oxide-[protein] + a quinol. The enzyme catalyses L-methionyl-[protein] + a quinone + H2O = L-methionyl-(R)-S-oxide-[protein] + a quinol. Part of the MsrPQ system that repairs oxidized periplasmic proteins containing methionine sulfoxide residues (Met-O), using respiratory chain electrons. Thus protects these proteins from oxidative-stress damage caused by reactive species of oxygen and chlorine generated by the host defense mechanisms. MsrPQ is essential for the maintenance of envelope integrity under bleach stress, rescuing a wide series of structurally unrelated periplasmic proteins from methionine oxidation. The catalytic subunit MsrP is non-stereospecific, being able to reduce both (R-) and (S-) diastereoisomers of methionine sulfoxide. The chain is Protein-methionine-sulfoxide reductase catalytic subunit MsrP from Actinobacillus pleuropneumoniae serotype 3 (strain JL03).